Here is a 585-residue protein sequence, read N- to C-terminus: Probable multidrug resistance ABC transporter ATP-binding/permease protein YheI (585 aa).

The 286-residue stretch at 19–304 folds into the ABC transmembrane type-1 domain; it reads YTIAIVLLLA…IGELINVMQR (286 aa). Helical transmembrane passes span 21-41, 57-77, 127-147, 149-169, 249-269, and 279-299; these read IAIVLLLAVNVIEMFPPKLLG, LLFYIGIFFVLTAAVYIMSYF, AVSLTTGFGILTLVDSTMFMM, IFLTMGFLISWKLTFAAIIPL, VKLLVGASYLIGLGYGAFLVF, and VSFNVYLGMMIWPMFAIGELI. The ABC transporter domain occupies 337–572; the sequence is IVFSHVSFTY…NGWYREQYER (236 aa). 371–378 is an ATP binding site; the sequence is GKTGSGKT.

Belongs to the ABC transporter superfamily. As to quaternary structure, heterodimer composed of YheH and YheI.

Its subcellular location is the cell membrane. With respect to regulation, inhibited by ortho-vanadate. Involved in the transport of four structurally unrelated drugs, including doxorubicin and mitoxantrone. Transmembrane domains (TMD) form a pore in the membrane and the ATP-binding domain (NBD) is responsible for energy generation. This chain is Probable multidrug resistance ABC transporter ATP-binding/permease protein YheI (yheI), found in Bacillus subtilis (strain 168).